Reading from the N-terminus, the 607-residue chain is Glutamyl-tRNA(Gln) amidotransferase subunit E (607 aa).

This sequence belongs to the GatB/GatE family. GatE subfamily. As to quaternary structure, heterodimer of GatD and GatE.

It catalyses the reaction L-glutamyl-tRNA(Gln) + L-glutamine + ATP + H2O = L-glutaminyl-tRNA(Gln) + L-glutamate + ADP + phosphate + H(+). Functionally, allows the formation of correctly charged Gln-tRNA(Gln) through the transamidation of misacylated Glu-tRNA(Gln) in organisms which lack glutaminyl-tRNA synthetase. The reaction takes place in the presence of glutamine and ATP through an activated gamma-phospho-Glu-tRNA(Gln). The GatDE system is specific for glutamate and does not act on aspartate. The protein is Glutamyl-tRNA(Gln) amidotransferase subunit E of Pyrobaculum islandicum (strain DSM 4184 / JCM 9189 / GEO3).